The following is a 761-amino-acid chain: Mitochondrial intermediate peptidase (761 aa).

Residues 1–37 (MLIQKILLNKEISRLPRILSILNYTGLRWLSGSSGRN) constitute a mitochondrion transit peptide. His547 contributes to the Zn(2+) binding site. Glu548 is a catalytic residue. Zn(2+) is bound by residues His551 and His554.

It belongs to the peptidase M3 family. It depends on Zn(2+) as a cofactor.

It is found in the mitochondrion matrix. It carries out the reaction Release of an N-terminal octapeptide as second stage of processing of some proteins imported into the mitochondrion.. Cleaves proteins, imported into the mitochondrion, to their mature size. While most mitochondrial precursor proteins are processed to the mature form in one step by mitochondrial processing peptidase (MPP), the sequential cleavage by MIP of an octapeptide after initial processing by MPP is a required step for a subgroup of nuclear-encoded precursor proteins destined for the matrix or the inner membrane. This is Mitochondrial intermediate peptidase (OCT1) from Candida glabrata (strain ATCC 2001 / BCRC 20586 / JCM 3761 / NBRC 0622 / NRRL Y-65 / CBS 138) (Yeast).